We begin with the raw amino-acid sequence, 276 residues long: MKKCINIEKIQKIGLFCRLNTNLNKQIDFLRAIFLQKNIELVLLEQEKINLKDLQELDFLISLGGDGTLLSLCRQAYQAKKPILGINAGNLGFLTALSFNEAESFFKDFFKNDFKIEKAKMLQITLYKKNKIIKKFAFNDAVFSRDNALMANVEVFFENKLFNAYYGDGLIIASSSGSTAYNISAGGPIVHPWSEIFVLTPVCSHSLTQRPIVLPYGFELELKVEHCLLYLDGQEVVDPKEYDKILIGLSKKELSFIHKKNRDYFQVLKEKLNWGK.

Asp-66 acts as the Proton acceptor in catalysis. Residues Asp-66 to Gly-67, Asn-139 to Asp-140, Asp-168, Thr-179 to Ser-184, and Gln-234 contribute to the NAD(+) site.

The protein belongs to the NAD kinase family. The cofactor is a divalent metal cation.

The protein localises to the cytoplasm. The enzyme catalyses NAD(+) + ATP = ADP + NADP(+) + H(+). Functionally, involved in the regulation of the intracellular balance of NAD and NADP, and is a key enzyme in the biosynthesis of NADP. Catalyzes specifically the phosphorylation on 2'-hydroxyl of the adenosine moiety of NAD to yield NADP. The sequence is that of NAD kinase from Campylobacter lari (strain RM2100 / D67 / ATCC BAA-1060).